Consider the following 161-residue polypeptide: Transcription elongation factor GreA (161 aa).

Residues 46-71 (AEYTAAKEKQSFLHGKLQELENNLAL) adopt a coiled-coil conformation.

The protein belongs to the GreA/GreB family.

In terms of biological role, necessary for efficient RNA polymerase transcription elongation past template-encoded arresting sites. The arresting sites in DNA have the property of trapping a certain fraction of elongating RNA polymerases that pass through, resulting in locked ternary complexes. Cleavage of the nascent transcript by cleavage factors such as GreA or GreB allows the resumption of elongation from the new 3'terminus. GreA releases sequences of 2 to 3 nucleotides. This Syntrophus aciditrophicus (strain SB) protein is Transcription elongation factor GreA.